The chain runs to 303 residues: Target of rapamycin complex subunit LST8 (303 aa).

WD repeat units follow at residues 1 to 27 (MSVILVSAGYDHTIRFWEALTGVCSRT), 30 to 68 (HSDSQVNRLEITNDKKLLATAGHQNVRLYDIRTTNPNPV), 73 to 112 (GHRGNVTSVSFQQDNRWMVTSSEDGTIKVWDVRSPSIPRN), 114 to 153 (KHNAPVNEVVIHPNQGELISCDRDGNIRIWDLGENQCTHQ), 157 to 196 (EDDTSLQSLSMASDGSMLAAANTKGNCYVWEMPNHTDASH), 205 to 244 (AHSTYITRILLSSDVKHLATCSADHTARVWSIDDDFKLET), and 248 to 287 (GHQRWVWDCAFSADSAYLVTASSDHYVRLWDLSTREIVRQ).

The protein belongs to the WD repeat LST8 family. As to quaternary structure, the target of rapamycin complex 1 (TORC1) is composed of at least KOG1, LST8, TCO89 and either TOR1 (TORC1-A) or TOR2 (TORC1-B). TORC1 binds to and is inhibited by FKBP-rapamycin. Interacts with PIB2; following activation of PIB2 by glutamine or cysteine and as part of the TORC1 complex. The target of rapamycin complex 2 (TORC2) is composed of at least AVO1, AVO2, BIT61, LST8, TOR2 and TSC11. TORC2 forms a homodimer. Contrary to TORC1, TORC2 does not bind to and is not sensitive to FKBP-rapamycin. LST8 binds to the C-terminal kinase domain in TOR2.

It localises to the cell membrane. The protein resides in the vacuole membrane. In terms of biological role, essential component of both TORC1 and TORC2. TORC1 regulates multiple cellular processes to control cell growth in response to environmental signals. Nutrient limitation and environmental stress signals cause inactivation of TORC1. Active TORC1 positively controls ribosome biogenesis via control of rRNA, ribosomal protein and tRNA gene expression, and rRNA processing. TORC1 positively controls protein biosynthesis by regulation of mRNA stability, translation initiation factor activity, and high-affinity amino acid permeases that serve to provide amino acids for use by the translation machinery. TORC1 also promotes growth by sequestering a number of nutrient and general stress-responsive transcription factors in the cytoplasm. TORC1 negatively controls macroautophagy, a process to recycle surplus cytoplasmic mass under nutrient starvation conditions. LST8 is involved in the negative regulation of transcription factors GLN3 and RTG1-RTG3, limiting the synthesis of alpha-ketoglutarate, glutamate and glutamine. LST8 is required for targeting of amino acid permeases (AAPs) to the plasma membrane. TORC2 regulates cell cycle-dependent polarization of the actin-cytoskeleton, cell wall integrity, and receptor endocytosis. TORC2 controls polarity of the actin cytoskeleton, which is required for orienting the secretory pathway toward discrete growth sites, via the RHO1/PKC1/MAPK cell integrity pathway. LST8 is involved in maintenance of cell wall integrity. LST8 modulates TOR2 kinase activity. This chain is Target of rapamycin complex subunit LST8, found in Saccharomyces cerevisiae (strain ATCC 204508 / S288c) (Baker's yeast).